The primary structure comprises 273 residues: Putative phosphoenolpyruvate synthase regulatory protein (273 aa).

ADP is bound at residue 153–160; it reads GVSRSGKT.

This sequence belongs to the pyruvate, phosphate/water dikinase regulatory protein family. PSRP subfamily.

It carries out the reaction [pyruvate, water dikinase] + ADP = [pyruvate, water dikinase]-phosphate + AMP + H(+). The enzyme catalyses [pyruvate, water dikinase]-phosphate + phosphate + H(+) = [pyruvate, water dikinase] + diphosphate. Functionally, bifunctional serine/threonine kinase and phosphorylase involved in the regulation of the phosphoenolpyruvate synthase (PEPS) by catalyzing its phosphorylation/dephosphorylation. The sequence is that of Putative phosphoenolpyruvate synthase regulatory protein from Variovorax paradoxus (strain S110).